A 262-amino-acid polypeptide reads, in one-letter code: Glutamate racemase (262 aa).

Substrate-binding positions include 5-6 (DS) and 37-38 (YG). The active-site Proton donor/acceptor is the Cys69. Substrate is bound at residue 70–71 (NT). Cys181 serves as the catalytic Proton donor/acceptor. 182–183 (TH) contributes to the substrate binding site.

The protein belongs to the aspartate/glutamate racemases family.

The enzyme catalyses L-glutamate = D-glutamate. Its pathway is cell wall biogenesis; peptidoglycan biosynthesis. Provides the (R)-glutamate required for cell wall biosynthesis. In Buchnera aphidicola subsp. Acyrthosiphon pisum (strain APS) (Acyrthosiphon pisum symbiotic bacterium), this protein is Glutamate racemase.